Reading from the N-terminus, the 932-residue chain is Protocadherin gamma-A3 (932 aa).

Positions 1 to 29 (MTNCLSFRNGRGLALLCALLGTLCETGSG) are cleaved as a signal peptide. Cadherin domains are found at residues 30 to 133 (QIRY…APNF), 134 to 242 (PTEE…PPMF), 243 to 347 (TQPE…APEI), 348 to 452 (TITS…PPTF), 453 to 562 (PHLS…APEI), and 570 to 682 (DGST…EPSA). Residues 30-692 (QIRYSVSEEL…KPNDSDLTLY (663 aa)) are Extracellular-facing. N-linked (GlcNAc...) asparagine glycans are attached at residues Asn-265, Asn-419, and Asn-545. N-linked (GlcNAc...) asparagine glycosylation is present at Asn-685. A helical membrane pass occupies residues 693–713 (LVVAVAAVSCVFLALVIVLLA). Residues 714 to 932 (HRLRRWHKSR…KKKSGKKEKK (219 aa)) lie on the Cytoplasmic side of the membrane. Disordered regions lie at residues 806–841 (LLQQ…WPNN) and 902–932 (ATLT…KEKK). The segment covering 922 to 932 (NKKKSGKKEKK) has biased composition (basic residues).

The protein localises to the cell membrane. In terms of biological role, potential calcium-dependent cell-adhesion protein. May be involved in the establishment and maintenance of specific neuronal connections in the brain. In Pan troglodytes (Chimpanzee), this protein is Protocadherin gamma-A3 (PCDHGA3).